Reading from the N-terminus, the 517-residue chain is GMP synthase [glutamine-hydrolyzing] (517 aa).

Positions 9–199 constitute a Glutamine amidotransferase type-1 domain; the sequence is RILILDFGSQ…VLGVCGCERL (191 aa). Catalysis depends on C86, which acts as the Nucleophile. Catalysis depends on residues H173 and E175. A GMPS ATP-PPase domain is found at 200-392; sequence WTSESIIEDA…LGLPYNMLYR (193 aa). 227 to 233 is an ATP binding site; sequence SGGVDSS.

Homodimer.

It catalyses the reaction XMP + L-glutamine + ATP + H2O = GMP + L-glutamate + AMP + diphosphate + 2 H(+). It functions in the pathway purine metabolism; GMP biosynthesis; GMP from XMP (L-Gln route): step 1/1. Catalyzes the synthesis of GMP from XMP. The polypeptide is GMP synthase [glutamine-hydrolyzing] (Vibrio cholerae serotype O1 (strain ATCC 39541 / Classical Ogawa 395 / O395)).